The following is a 3085-amino-acid chain: Genome polyprotein (3085 aa).

The Peptidase S30 domain occupies 170-313; that stretch reads LVAKSDFDDL…AGDVGRTMHY (144 aa). Active-site for P1 proteinase activity residues include His-224, Glu-233, and Ser-266. Residues 365 to 368 carry the Involved in interaction with stylet and aphid transmission motif; that stretch reads KMAC. The Involved in virions binding and aphid transmission motif lies at 622-624; sequence PTK. A Peptidase C6 domain is found at 648–770; the sequence is MYIAKEGYCY…EGEMKWYRVG (123 aa). Active-site for helper component proteinase activity residues include Cys-656 and His-729. The Helicase ATP-binding domain maps to 1241-1393; sequence TICASSEQEF…TQHDVLIKIE (153 aa). 1254–1261 is a binding site for ATP; the sequence is GAVGSGKS. Positions 1343-1346 match the DESH box motif; that stretch reads DESH. Positions 1412-1571 constitute a Helicase C-terminal domain; it reads DVVQNGDNIL…NLPVMTHNVT (160 aa). The short motif at 1895–1904 is the Nuclear localization signal element; it reads ERGKRKGNNS. Tyr-1919 is subject to O-(5'-phospho-RNA)-tyrosine. A Peptidase C4 domain is found at 2047–2266; the sequence is GKSIVKGLRN…VAWNGMTLRE (220 aa). Active-site for nuclear inclusion protein A activity residues include His-2092, Asp-2127, and Cys-2198. The RdRp catalytic domain maps to 2535–2659; sequence WIYCDADGSQ…AIYPSKEKFL (125 aa). The segment at 2801–2869 is disordered; it reads DGPDIVTYQG…STAVPRLKQI (69 aa). Low complexity predominate over residues 2816 to 2831; it reads KSSQPQSSSPQVPQQV. Residues 2839 to 2855 show a composition bias toward basic and acidic residues; sequence GRDKQSVIKHDSTKSKD. Thr-3068 carries the post-translational modification Phosphothreonine.

Belongs to the potyviridae genome polyprotein family. In terms of assembly, interacts with host eIF4E protein (via cap-binding region); this interaction mediates the translation of the VPg-viral RNA conjugates. Part of a complex that comprises VPg, RNA, host EIF4E and EIF4G; this interaction mediates the translation of the VPg-viral RNA conjugates. Post-translationally, VPg is uridylylated by the polymerase and is covalently attached to the 5'-end of the genomic RNA. This uridylylated form acts as a nucleotide-peptide primer for the polymerase. In terms of processing, potyviral RNA is expressed as two polyproteins which undergo post-translational proteolytic processing. Genome polyprotein is processed by NIa-pro, P1 and HC-pro proteinases resulting in the production of at least ten individual proteins. P3N-PIPO polyprotein is cleaved by P1 and HC-pro proteinases resulting in the production of three individual proteins. The P1 proteinase and the HC-pro cleave only their respective C-termini autocatalytically. 6K1 is essential for proper proteolytic separation of P3 from CI.

The protein localises to the host cytoplasmic vesicle. It is found in the host nucleus. It localises to the virion. It carries out the reaction RNA(n) + a ribonucleoside 5'-triphosphate = RNA(n+1) + diphosphate. The enzyme catalyses Hydrolyzes glutaminyl bonds, and activity is further restricted by preferences for the amino acids in P6 - P1' that vary with the species of potyvirus, e.g. Glu-Xaa-Xaa-Tyr-Xaa-Gln-|-(Ser or Gly) for the enzyme from tobacco etch virus. The natural substrate is the viral polyprotein, but other proteins and oligopeptides containing the appropriate consensus sequence are also cleaved.. The catalysed reaction is Hydrolyzes a Gly-|-Gly bond at its own C-terminus, commonly in the sequence -Tyr-Xaa-Val-Gly-|-Gly, in the processing of the potyviral polyprotein.. In terms of biological role, required for aphid transmission and also has proteolytic activity. Only cleaves a Gly-Gly dipeptide at its own C-terminus. Interacts with virions and aphid stylets. Acts as a suppressor of RNA-mediated gene silencing, also known as post-transcriptional gene silencing (PTGS), a mechanism of plant viral defense that limits the accumulation of viral RNAs. May have RNA-binding activity. Has helicase activity. It may be involved in replication. Its function is as follows. Indispensable for virus replication. Reduces the abundance of host transcripts related to jasmonic acid biosynthesis therefore altering the host defenses. In order to increase its own stability, decreases host protein degradation pathways. Functionally, indispensable for virus replication. In terms of biological role, mediates the cap-independent, EIF4E-dependent translation of viral genomic RNAs. Binds to the cap-binding site of host EIF4E and thus interferes with the host EIF4E-dependent mRNA export and translation. VPg-RNA directly binds EIF4E and is a template for transcription. Also forms trimeric complexes with EIF4E-EIF4G, which are templates for translation. Has RNA-binding and proteolytic activities. Its function is as follows. An RNA-dependent RNA polymerase that plays an essential role in the virus replication. Functionally, involved in aphid transmission, cell-to-cell and systemis movement, encapsidation of the viral RNA and in the regulation of viral RNA amplification. The polypeptide is Genome polyprotein (Beet mosaic virus (BtMV)).